The following is a 906-amino-acid chain: E3 ubiquitin-protein ligase CBL (906 aa).

Residues 1 to 21 are disordered; sequence MAGNVKKSSGAGGGSGSGGSG. The tract at residues 1 to 357 is sufficient for interaction with EPHB1; sequence MAGNVKKSSG…DLTGLCEPTP (357 aa). The span at 10–21 shows a compositional bias: gly residues; it reads GAGGGSGSGGSG. The 4H stretch occupies residues 47–175; the sequence is PPGTVDKKMV…KGIFPSGLFQ (129 aa). The 305-residue stretch at 47-351 folds into the Cbl-PTB domain; sequence PPGTVDKKMV…GRNQNPDLTG (305 aa). Residues 176–248 are EF-hand-like; the sequence is GDTFRITKAD…FEFDIFTRLF (73 aa). Ca(2+) is bound by residues Asp229, Thr231, Asn233, Tyr235, and Glu240. Residues 249–351 are SH2-like; the sequence is QPWSSLLRNW…GRNQNPDLTG (103 aa). Position 294 (Arg294) interacts with 4-O-phospho-L-tyrosine. The interval 352-380 is linker; sequence LCEPTPQDHIKVTQEQYELYCEMGSTFQL. The segment at 358-906 is required for ubiquitination of SPRED2; it reads QDHIKVTQEQ…SISSPAHVAT (549 aa). Tyr371 carries the post-translational modification Phosphotyrosine; by INSR. Residues 381-420 form an RING-type zinc finger; the sequence is CKICAENDKDVKIEPCGHLMCTSCLTSWQESEGQGCPFCR. Disordered regions lie at residues 432-462, 477-498, and 519-667; these read DPFDPRGSGSLLRQGAEGAPSPNYDDDDDER, KVERPPSPFSMAPQASLPPVPP, and ASKA…IKPS. A phosphoserine mark is found at Ser439, Ser452, and Ser483. Residues 533–550 are compositionally biased toward pro residues; it reads LPVPPTLRDLPPPPPPDR. Ser619, Ser642, Ser668, and Ser669 each carry phosphoserine. Positions 639-653 are enriched in polar residues; that stretch reads STFSLDTSMSMNSSP. Residues 648 to 906 form an interaction with CD2AP region; the sequence is SMNSSPLVGP…SISSPAHVAT (259 aa). Tyr674 is subject to Phosphotyrosine. The interval 680–719 is disordered; that stretch reads PLPVPKLPPGEQCEGEEDTEYMTPSSRPLRPLDTSQSSRA. Tyr700 is modified (phosphotyrosine; by ABL1). Tyr731 is subject to Phosphotyrosine; by SRC. 2 disordered regions span residues 743–781 and 799–854; these read SITESSTFGEGNLAAAHANTGPEESENEDDGYDVPKPPV and SFGW…ATAS. Acidic residues predominate over residues 765–774; that stretch reads EESENEDDGY. Phosphotyrosine is present on Tyr774. Residues 838–854 show a composition bias toward low complexity; that stretch reads GSCQQGSGPAASAATAS. Residues 856–895 enclose the UBA domain; it reads QLSSEIENLMSQGYSYQDIQKALVIAQNNIEMAKNILREF. Ser900 bears the Phosphoserine mark.

In terms of assembly, forms homodimers; IFT20 promotes the formation of stable homodimers. Interacts (phosphorylated at Tyr-731) with PIK3R1. Associates with NCK via its SH3 domain. The phosphorylated C-terminus interacts with CD2AP via its second SH3 domain. Binds to UBE2L3. Interacts with adapters SLA, SLA2 and with the phosphorylated C-terminus of SH2B2. Interacts with EGFR, SYK and ZAP70 via the highly conserved Cbl-N region. Also interacts with SORBS1 and INPPL1/SHIP2. Interacts with phosphorylated LAT2. Interacts with CBLB. Interacts with ALK, AXL, BLK, FGR and FGFR2. Interacts with CSF1R, EPHB1, FLT1, KDR, PDGFRA and PDGFRB; regulates receptor degradation through ubiquitination. Interacts with HCK and LYN. Interacts with ATX2. Interacts with TEK/TIE2 (tyrosine phosphorylated). Interacts with SH3KBP1 and this interaction is inhibited in the presence of SHKBP1 or ARAP1. Interacts with SIGLEC10. Interacts with IFT20. Interacts with SPRY2; the interaction inhibits CBL-mediated ubiquitination of EGFR. Interacts (phosphorylated at Tyr-774) with tensin TNS4 (via SH2 domain); the interaction is enhanced in the presence of EGF and reduces interaction of CBL with EGFR. Interacts with EGFR; the interaction is reduced in the presence of TNS4. Interacts with CD5. Interacts with CD93. (Microbial infection) Interacts with M.tuberculosis LpqN, which influences the balance between intrinsic antibacterial and antiviral defense. Post-translationally, phosphorylated on tyrosine residues by ALK, EGFR, SYK, FYN and ZAP70. Phosphorylated on tyrosine residues in response to FLT1 and KIT signaling. Phosphorylated on tyrosine residues by INSR and FGR. Phosphorylated on several tyrosine residues by constitutively activated FGFR3. Not phosphorylated at Tyr-731 by FGFR3. Phosphorylated on tyrosine residues by activated CSF1R, PDGFRA and PDGFRB. Phosphorylated on tyrosine residues by HCK. Ubiquitinated, leading to its degradation via the proteasome. Ubiquitination is negatively regulated by IFT20.

It is found in the cytoplasm. Its subcellular location is the cell membrane. The protein resides in the cell projection. The protein localises to the cilium. It localises to the golgi apparatus. It carries out the reaction S-ubiquitinyl-[E2 ubiquitin-conjugating enzyme]-L-cysteine + [acceptor protein]-L-lysine = [E2 ubiquitin-conjugating enzyme]-L-cysteine + N(6)-ubiquitinyl-[acceptor protein]-L-lysine.. It participates in protein modification; protein ubiquitination. In terms of biological role, E3 ubiquitin-protein ligase that acts as a negative regulator of many signaling pathways by mediating ubiquitination of cell surface receptors. Accepts ubiquitin from specific E2 ubiquitin-conjugating enzymes, and then transfers it to substrates promoting their degradation by the proteasome. Recognizes activated receptor tyrosine kinases, including KIT, FLT1, FGFR1, FGFR2, PDGFRA, PDGFRB, CSF1R, EPHA8 and KDR and mediates their ubiquitination to terminate signaling. Recognizes membrane-bound HCK, SRC and other kinases of the SRC family and mediates their ubiquitination and degradation. Ubiquitinates EGFR and SPRY2. Ubiquitinates NECTIN1 following association between NECTIN1 and herpes simplex virus 1/HHV-1 envelope glycoprotein D, leading to NECTIN1 removal from cell surface. Participates in signal transduction in hematopoietic cells. Plays an important role in the regulation of osteoblast differentiation and apoptosis. Essential for osteoclastic bone resorption. The 'Tyr-731' phosphorylated form induces the activation and recruitment of phosphatidylinositol 3-kinase to the cell membrane in a signaling pathway that is critical for osteoclast function. May be functionally coupled with the E2 ubiquitin-protein ligase UB2D3. In association with CBLB, required for proper feedback inhibition of ciliary platelet-derived growth factor receptor-alpha (PDGFRA) signaling pathway via ubiquitination and internalization of PDGFRA. The protein is E3 ubiquitin-protein ligase CBL (CBL) of Homo sapiens (Human).